A 321-amino-acid chain; its full sequence is ATP-dependent 6-phosphofructokinase (321 aa).

Glycine 11 serves as a coordination point for ATP. 21-25 contacts ADP; the sequence is RAVVR. Residues 72–73 and 102–105 each bind ATP; these read RC and GDGS. Aspartate 103 serves as a coordination point for Mg(2+). 126 to 128 provides a ligand contact to substrate; sequence TID. Aspartate 128 serves as the catalytic Proton acceptor. Arginine 155 lines the ADP pocket. Substrate-binding positions include arginine 163 and 170-172; that span reads MGR. ADP contacts are provided by residues 186 to 188, arginine 212, and 214 to 216; these read GAE and KLH. Residues glutamate 223, arginine 245, and 251-254 each bind substrate; that span reads HIQR.

The protein belongs to the phosphofructokinase type A (PFKA) family. ATP-dependent PFK group I subfamily. Prokaryotic clade 'B1' sub-subfamily. As to quaternary structure, homotetramer. Mg(2+) serves as cofactor.

The protein localises to the cytoplasm. It carries out the reaction beta-D-fructose 6-phosphate + ATP = beta-D-fructose 1,6-bisphosphate + ADP + H(+). It participates in carbohydrate degradation; glycolysis; D-glyceraldehyde 3-phosphate and glycerone phosphate from D-glucose: step 3/4. Allosterically activated by ADP and other diphosphonucleosides, and allosterically inhibited by phosphoenolpyruvate. Catalyzes the phosphorylation of D-fructose 6-phosphate to fructose 1,6-bisphosphate by ATP, the first committing step of glycolysis. The polypeptide is ATP-dependent 6-phosphofructokinase (Caldanaerobacter subterraneus subsp. tengcongensis (strain DSM 15242 / JCM 11007 / NBRC 100824 / MB4) (Thermoanaerobacter tengcongensis)).